Consider the following 511-residue polypeptide: NAD(P)H-quinone oxidoreductase subunit 2 B, chloroplastic (511 aa).

The next 13 helical transmembrane spans lie at 24 to 44, 57 to 77, 99 to 119, 124 to 144, 149 to 169, 183 to 203, 227 to 247, 295 to 315, 323 to 343, 354 to 374, 395 to 415, 418 to 438, and 484 to 504; these read LLLF…GLIL, IPWL…ALLF, IFQF…VEYI, MAIT…MFLC, LITI…LSGY, YLLM…WLYG, PGIS…LSPA, WHLL…LIAI, MLAY…IVGD, YMLF…LFGL, ALSL…AGFF, LHLF…IGLL, and MIVC…IIAI.

It belongs to the complex I subunit 2 family. In terms of assembly, NDH is composed of at least 16 different subunits, 5 of which are encoded in the nucleus.

It localises to the plastid. The protein resides in the chloroplast thylakoid membrane. The enzyme catalyses a plastoquinone + NADH + (n+1) H(+)(in) = a plastoquinol + NAD(+) + n H(+)(out). It catalyses the reaction a plastoquinone + NADPH + (n+1) H(+)(in) = a plastoquinol + NADP(+) + n H(+)(out). In terms of biological role, NDH shuttles electrons from NAD(P)H:plastoquinone, via FMN and iron-sulfur (Fe-S) centers, to quinones in the photosynthetic chain and possibly in a chloroplast respiratory chain. The immediate electron acceptor for the enzyme in this species is believed to be plastoquinone. Couples the redox reaction to proton translocation, and thus conserves the redox energy in a proton gradient. This chain is NAD(P)H-quinone oxidoreductase subunit 2 B, chloroplastic, found in Nandina domestica (Heavenly bamboo).